Here is a 141-residue protein sequence, read N- to C-terminus: uncharacterized protein (141 aa).

4 consecutive transmembrane segments (helical) span residues 7–24 (YRIP…FLSP), 39–56 (FLKF…HRGI), 69–91 (FYLI…ILGF), and 116–138 (FFIL…SSFI).

The protein localises to the cell membrane. This is an uncharacterized protein from Aquifex aeolicus (strain VF5).